Reading from the N-terminus, the 258-residue chain is Small ribosomal subunit protein uS2 (258 aa).

The protein belongs to the universal ribosomal protein uS2 family.

This chain is Small ribosomal subunit protein uS2, found in Granulibacter bethesdensis (strain ATCC BAA-1260 / CGDNIH1).